The primary structure comprises 236 residues: CD81 protein (236 aa).

Topologically, residues Met1 to Tyr12 are cytoplasmic. A helical transmembrane segment spans residues Leu13–Leu33. At Trp34 to Tyr63 the chain is on the extracellular side. Residues Ile64–Ile84 form a helical membrane-spanning segment. The Cytoplasmic portion of the chain corresponds to Gln85 to Cys89. Residues Leu90–Gly112 traverse the membrane as a helical segment. Topologically, residues Phe113–Lys201 are extracellular. 2 disulfides stabilise this stretch: Cys156–Cys190 and Cys157–Cys175. The helical transmembrane segment at Leu202 to Met224 threads the bilayer. Residue Glu219 coordinates cholesterol. The Cytoplasmic segment spans residues Val225–Tyr236.

Belongs to the tetraspanin (TM4SF) family. Homodimer. Part of a complex composed of CD19, CR2/CD21, CD81 and IFITM1/CD225 in the membrane of mature B cells. Interacts (via the second extracellular domain) with CD19; this interaction is initiated early during biosynthesis in the ER and enables trafficking of only properly folded CD19. Part of a complex that includes MHC class II/HLA-DR molecules and IFITM1. Interacts with IFITM1. Interacts with IFITM2 and IFITM3. Part of integrin-tetraspanin complex composed of CD9, CD81, beta-1 and beta-2 integrins in the membrane of monocyte/macrophages. Interacts (via the second extracellular domain) with integrin ITGAV:ITGB3. Interacts with CD247/CD3 zeta, ICAM1 and CD9 at the immune synapse on T cell membrane. Part of a GPCR-tetraspanin complex consisting at least of ADGRG1, CD81, possibly CD9, and GNA11 in which CD81 enhances the association of ADGRG1 with GNA11. Part of a complex composed of CD9, CD81, PTGFRN and IGSF8. Interacts directly with IGSF8. Interacts with CD53 and SCIMP. Interacts with SAMHD1 (via its C-terminus). Interacts with glypican GPC3 and with the transcriptional repressor HHEX; binding to GPC3 decreases the availability of free CD81 for binding to HHEX, resulting in nuclear translocation of HHEX and transcriptional repression. Interacts with CLDN1. Interacts with CLDN6 and CLDN9. Not glycosylated. Post-translationally, likely constitutively palmitoylated at low levels. Protein palmitoylation is up-regulated upon coligation of BCR and CD9-C2R-CD81 complexes in lipid rafts.

The protein resides in the cell membrane. The protein localises to the basolateral cell membrane. Structural component of specialized membrane microdomains known as tetraspanin-enriched microdomains (TERMs), which act as platforms for receptor clustering and signaling. Essential for trafficking and compartmentalization of CD19 receptor on the surface of activated B cells. Upon initial encounter with microbial pathogens, enables the assembly of CD19-CR2/CD21 and B cell receptor (BCR) complexes at signaling TERMs, lowering the threshold dose of antigen required to trigger B cell clonal expansion and antibody production. In T cells, facilitates the localization of CD247/CD3 zeta at antigen-induced synapses with B cells, providing for costimulation and polarization toward T helper type 2 phenotype. Present in MHC class II compartments, may also play a role in antigen presentation. Can act both as positive and negative regulator of homotypic or heterotypic cell-cell fusion processes. Positively regulates sperm-egg fusion and may be involved in acrosome reaction. In myoblasts, associates with CD9 and PTGFRN and inhibits myotube fusion during muscle regeneration. In macrophages, associates with CD9 and beta-1 and beta-2 integrins, and prevents macrophage fusion into multinucleated giant cells specialized in ingesting complement-opsonized large particles. Also prevents the fusion of mononuclear cell progenitors into osteoclasts in charge of bone resorption. May regulate the compartmentalization of enzymatic activities. In T cells, defines the subcellular localization of dNTPase SAMHD1 and permits its degradation by the proteasome, thereby controlling intracellular dNTP levels. Also involved in cell adhesion and motility. Positively regulates integrin-mediated adhesion of macrophages, particularly relevant for the inflammatory response in the lung. This is CD81 protein (CD81) from Saguinus oedipus (Cotton-top tamarin).